Reading from the N-terminus, the 712-residue chain is Probable metal-nicotianamine transporter YSL11 (712 aa).

The interval 25–48 (RRNTTAAARGNAGEEEEEAEAVAP) is disordered. A run of 14 helical transmembrane segments spans residues 70 to 90 (AFVVGFLLSIMFNIIVMKLSL), 93 to 113 (GVIPSLNVSASLLGFFLVRLW), 138 to 158 (CVVSAYGVAFSGGFGSYLFGM), 180 to 200 (LGWIIGFMFLVSFVGLFALVP), 242 to 262 (LGKYFSISFLWAFFQWFYTAG), 300 to 320 (IVNVSLLIGGIISWGIMWPLI), 345 to 365 (VFITIAVILGDGLYNFVKVFG), 418 to 438 (VAIGGYVVLAVITSGCLPLII), 446 to 466 (ILIAYIFAPIMAFCNAYGSGL), 478 to 498 (LAIFVFGAWAGASHGGVLVGL), 532 to 552 (FVSQVIGTAMGCVIAPCVFWL), 593 to 613 (LTLCYIAFVAAFIINLIKDLV), 631 to 651 (FYLGPYFAIDMFMGSVILYFW), and 666 to 686 (VASGLMCGDGLWALPQAVLSL).

It belongs to the YSL (TC 2.A.67.2) family.

It localises to the membrane. May be involved in the transport of nicotianamine-chelated metals. The chain is Probable metal-nicotianamine transporter YSL11 (YSL11) from Oryza sativa subsp. japonica (Rice).